Here is a 573-residue protein sequence, read N- to C-terminus: Urease subunit alpha (573 aa).

The Urease domain occupies 136–573; sequence GAIDCHVHFI…LPMAQRYFLF (438 aa). The Ni(2+) site is built by His-141, His-143, and Lys-224. Position 224 is an N6-carboxylysine (Lys-224). His-226 serves as a coordination point for substrate. Ni(2+) is bound by residues His-253 and His-279. His-327 acts as the Proton donor in catalysis. A Ni(2+)-binding site is contributed by Asp-367.

The protein belongs to the metallo-dependent hydrolases superfamily. Urease alpha subunit family. In terms of assembly, heterotrimer of UreA (gamma), UreB (beta) and UreC (alpha) subunits. Three heterotrimers associate to form the active enzyme. Ni cation is required as a cofactor. Carboxylation allows a single lysine to coordinate two nickel ions.

It is found in the cytoplasm. The catalysed reaction is urea + 2 H2O + H(+) = hydrogencarbonate + 2 NH4(+). The protein operates within nitrogen metabolism; urea degradation; CO(2) and NH(3) from urea (urease route): step 1/1. The sequence is that of Urease subunit alpha from Nocardia farcinica (strain IFM 10152).